The chain runs to 467 residues: MAP kinase-interacting serine/threonine-protein kinase 2 (467 aa).

One can recognise a Protein kinase domain in the interval 83–367 (QLQQEILGEG…AAQVLQHPWV (285 aa)). ATP is bound by residues 89-97 (LGEGAYAKV) and Lys-112. Asp-204 serves as the catalytic Proton acceptor. Cys-298, Cys-310, and Cys-313 together coordinate Zn(2+). Positions 432–467 (MQLSPPSESKLAKRRQQGSKGGISPPSLAPLLIVSD) are disordered.

This sequence belongs to the protein kinase superfamily. CAMK Ser/Thr protein kinase family. Mg(2+) is required as a cofactor. Zn(2+) serves as cofactor.

The catalysed reaction is L-seryl-[protein] + ATP = O-phospho-L-seryl-[protein] + ADP + H(+). It carries out the reaction L-threonyl-[protein] + ATP = O-phospho-L-threonyl-[protein] + ADP + H(+). In terms of biological role, may play a role in the response to environmental stress and cytokines. Appears to regulate translation by phosphorylating EIF4E, thus increasing the affinity of this protein for the 7-methylguanosine-containing mRNA cap. This is MAP kinase-interacting serine/threonine-protein kinase 2 (mknk2) from Xenopus laevis (African clawed frog).